Here is a 475-residue protein sequence, read N- to C-terminus: Aspartyl/glutamyl-tRNA(Asn/Gln) amidotransferase subunit B (475 aa).

This sequence belongs to the GatB/GatE family. GatB subfamily. In terms of assembly, heterotrimer of A, B and C subunits.

The catalysed reaction is L-glutamyl-tRNA(Gln) + L-glutamine + ATP + H2O = L-glutaminyl-tRNA(Gln) + L-glutamate + ADP + phosphate + H(+). The enzyme catalyses L-aspartyl-tRNA(Asn) + L-glutamine + ATP + H2O = L-asparaginyl-tRNA(Asn) + L-glutamate + ADP + phosphate + 2 H(+). Its function is as follows. Allows the formation of correctly charged Asn-tRNA(Asn) or Gln-tRNA(Gln) through the transamidation of misacylated Asp-tRNA(Asn) or Glu-tRNA(Gln) in organisms which lack either or both of asparaginyl-tRNA or glutaminyl-tRNA synthetases. The reaction takes place in the presence of glutamine and ATP through an activated phospho-Asp-tRNA(Asn) or phospho-Glu-tRNA(Gln). In Macrococcus caseolyticus (strain JCSC5402) (Macrococcoides caseolyticum), this protein is Aspartyl/glutamyl-tRNA(Asn/Gln) amidotransferase subunit B.